A 326-amino-acid polypeptide reads, in one-letter code: Eukaryotic translation initiation factor 3 subunit I (326 aa).

WD repeat units lie at residues Gly-8 to Thr-47, Gly-50 to Ser-89, Met-145 to Asp-184, Asp-188 to Thr-227, and Gly-285 to Glu-326.

This sequence belongs to the eIF-3 subunit I family. Component of the eukaryotic translation initiation factor 3 (eIF-3) complex. The eIF-3 complex interacts with pix.

Its subcellular location is the cytoplasm. In terms of biological role, component of the eukaryotic translation initiation factor 3 (eIF-3) complex, which is involved in protein synthesis of a specialized repertoire of mRNAs and, together with other initiation factors, stimulates binding of mRNA and methionyl-tRNAi to the 40S ribosome. The eIF-3 complex specifically targets and initiates translation of a subset of mRNAs involved in cell proliferation. The polypeptide is Eukaryotic translation initiation factor 3 subunit I (Drosophila grimshawi (Hawaiian fruit fly)).